Reading from the N-terminus, the 453-residue chain is tRNA modification GTPase MnmE (453 aa).

The (6S)-5-formyl-5,6,7,8-tetrahydrofolate site is built by arginine 22, glutamate 79, and lysine 119. Positions 215–376 (GMKVVIAGRP…LKQHLKSLMG (162 aa)) constitute a TrmE-type G domain. Residue asparagine 225 participates in K(+) binding. GTP is bound by residues 225–230 (NAGKSS), 244–250 (TEIAGTT), 269–272 (DTAG), and 334–337 (NKAD). Mg(2+) is bound at residue serine 229. Threonine 244, isoleucine 246, and threonine 249 together coordinate K(+). Threonine 250 is a binding site for Mg(2+). Lysine 453 lines the (6S)-5-formyl-5,6,7,8-tetrahydrofolate pocket.

It belongs to the TRAFAC class TrmE-Era-EngA-EngB-Septin-like GTPase superfamily. TrmE GTPase family. Homodimer. Heterotetramer of two MnmE and two MnmG subunits. K(+) is required as a cofactor.

It is found in the cytoplasm. Its function is as follows. Exhibits a very high intrinsic GTPase hydrolysis rate. Involved in the addition of a carboxymethylaminomethyl (cmnm) group at the wobble position (U34) of certain tRNAs, forming tRNA-cmnm(5)s(2)U34. The sequence is that of tRNA modification GTPase MnmE from Shewanella baltica (strain OS185).